A 482-amino-acid polypeptide reads, in one-letter code: Membrane-bound lytic murein transglycosylase F (482 aa).

A signal peptide spans 1 to 13 (MKGLFLRIITALA). The segment at 14-267 (LLFWAIDMVF…NLKEKYLGHI (254 aa)) is non-LT domain. The tract at residues 268–482 (SQFDYVDTRS…NLEEIKENKD (215 aa)) is LT domain. Glutamate 312 is an active-site residue.

The protein in the N-terminal section; belongs to the bacterial solute-binding protein 3 family. It in the C-terminal section; belongs to the transglycosylase Slt family.

It is found in the cell outer membrane. It carries out the reaction Exolytic cleavage of the (1-&gt;4)-beta-glycosidic linkage between N-acetylmuramic acid (MurNAc) and N-acetylglucosamine (GlcNAc) residues in peptidoglycan, from either the reducing or the non-reducing ends of the peptidoglycan chains, with concomitant formation of a 1,6-anhydrobond in the MurNAc residue.. Murein-degrading enzyme that degrades murein glycan strands and insoluble, high-molecular weight murein sacculi, with the concomitant formation of a 1,6-anhydromuramoyl product. Lytic transglycosylases (LTs) play an integral role in the metabolism of the peptidoglycan (PG) sacculus. Their lytic action creates space within the PG sacculus to allow for its expansion as well as for the insertion of various structures such as secretion systems and flagella. This Haemophilus influenzae (strain PittEE) protein is Membrane-bound lytic murein transglycosylase F.